We begin with the raw amino-acid sequence, 524 residues long: Probable cytochrome P450 12c1, mitochondrial (524 aa).

Cys-470 contributes to the heme binding site.

Belongs to the cytochrome P450 family. Heme serves as cofactor.

It is found in the mitochondrion membrane. The polypeptide is Probable cytochrome P450 12c1, mitochondrial (Cyp12c1) (Drosophila melanogaster (Fruit fly)).